The following is a 592-amino-acid chain: MRGKTVRRLAVLAAVGLLCHGAWAGTWNIGILAMRGEASTRSHWQPLAKTLSQQLPGETFHIQPLDLHQMQEAVNQGTVQFVITNPAQFVQLNSHAPLRWLASLRSTRDGKAVSNVIGSVILTRRDSGITTAHDLIGKTVGAIDAQAFGGYLLGYKALSDAGLRPERDFHLRFTGFPGDALVYMLREKAVQAAIVPVCLLENMDQEGLINKKDFIALLSRPTPLPCLTSTPLYPDWSFAALPAVSDALADRVTRALFNAPAAASFHWGAPASTSQVEALLRDVRQHPQQRRLWLDVKSWLIQHQLMVGGVILAFLLLTLNYIWVMLLVRRRGKQLERNSVVLHQHERALETARQMSVLGEMTSGFAHELNQPLSAIRHYAQGCLIRLRAADEQHPLLPALEQIDQQAQRGADTLRNLRHWVSQAQGNPVLTEAWKAIAIREAIDHVWQLLRMAQQFPTVTLHTEVSAALRVTLPSVLLEQVLANIILNAAQAGATHLWIVAERTENGISIVLQDNAGGIDEALLRQAFQPFMTTRKEGMGLGLAICQRLVRYGRGDISIRNQTAPDGLSGTVVTIHFLHENGGRDGDNSSTG.

2 helical membrane passes run 11–31 and 307–327; these read VLAA…NIGI and VGGV…VMLL. In terms of domain architecture, Histidine kinase spans 364-581; the sequence is GFAHELNQPL…VVTIHFLHEN (218 aa). His367 carries the phosphohistidine; by autocatalysis modification.

Autophosphorylated.

It localises to the cell inner membrane. The catalysed reaction is ATP + protein L-histidine = ADP + protein N-phospho-L-histidine.. In terms of biological role, member of the two-component regulatory system TtrR/TtrS, which is required for synthesis of tetrathionate reductase. Probably functions as a sensor protein kinase which is autophosphorylated at a histidine residue in response to tetrathionate, and transfers its phosphate group to TtrR. During mice infection, the ability to use tetrathionate as an electron acceptor is a growth advantage for S.typhimurium over the competing microbiota in the lumen of the inflamed gut. This chain is Tetrathionate sensor histidine kinase TtrS (ttrS), found in Salmonella typhimurium (strain LT2 / SGSC1412 / ATCC 700720).